A 273-amino-acid chain; its full sequence is uncharacterized protein (273 aa).

This is an uncharacterized protein from Acanthamoeba polyphaga mimivirus (APMV).